The following is an 894-amino-acid chain: MDESALLDLLECPVCLERLDASAKVLPCQHTFCKRCLLGIVGSRNELRCPECRTLVGSGVDELPSNILLVRLLDGIKQRPWKPGPGGGGSTTCTNVLRAQGSTVVNCGSKDLQSPQCGQQPRVQAWSPPVRGIPQLPCAKALYNYEGKEPGDLKFSKGDIIILRRQVDENWYHGEVNGVHGFFPTNFVQIIKPLPQPPPQCKALYDFEVKDKEADKDCLPFAKDDVLTVIRRVDENWAEGMLADKIGIFPISYVEFNSAAKQLIEWDKPPVPGVDTAECPSATAAQSSSASKHSDTKKNTRKRHSFTSLTMANKSSQASQNRHSMEISPPVLISSSNPTAAARISELSGLSCSAPSQVHISTTGLIVTPPPSSPVTTGPSFTFPTDVPYQAALGTMNPPLPPPPLLATTVLASTPSGATAAAVAAAAAAVAAGVGPRPAVGSTEQIAHLRPQTRPSVYVAIYPYTPRKEDELELRKGEMFLVFERCQDGWYKGTSMHTSKIGVFPGNYVAPVTRAVTNASQAKVPMSTAGQASRGVTMVSPSTAGGPAQKPQGNGVAGNPSVVPTAVVSAAHIQTSPQAKVLLHMTGQMTVNQARNAVRTVAAHNQERPTAAVTPIQVQNAACIGPASVGLPHHSLASQPLPPMVGPAAHIAAVNINRTSVPLACAAGASSLASPNMTTAALETEPSGRTVTILPGLPTSPESAASACGNSSAVKPDKDSKKEKKGLLKLLSGASTKRKPRVSPPASPTLDVELGSGEVPLQGAVGPELPLGGVHGRVGSCPTDGDGPVAAGTAALAQDAFHRKTSSLDSAVPIAPPPRQACSSLGPVMNEARPVVCERHRVVVSYPPQSEAELELKEGDIVFVHKKREDGWFKGTLQRNGKTGLFPGSFVENI.

The segment at 12 to 53 (CPVCLERLDASAKVLPCQHTFCKRCLLGIVGSRNELRCPECR) adopts an RING-type zinc-finger fold. 2 consecutive SH3 domains span residues 134 to 193 (PQLP…IIKP) and 196 to 259 (QPPP…FNSA). Residues 274–323 (VDTAECPSATAAQSSSASKHSDTKKNTRKRHSFTSLTMANKSSQASQNRH) form a disordered region. Over residues 281-291 (SATAAQSSSAS) the composition is skewed to low complexity. Residues 293 to 363 (HSDTKKNTRK…APSQVHISTT (71 aa)) form an interaction with RAC1 region. Position 305 is a phosphoserine (S305). The span at 306 to 322 (FTSLTMANKSSQASQNR) shows a compositional bias: polar residues. Positions 448-551 (HLRPQTRPSV…STAGGPAQKP (104 aa)) are interaction with AKT2. One can recognise an SH3 3 domain in the interval 453–514 (TRPSVYVAIY…PGNYVAPVTR (62 aa)). Disordered stretches follow at residues 526-556 (MSTA…GNGV) and 682-751 (LETE…PTLD). The residue at position 540 (S540) is a Phosphoserine. Residues 700–713 (SPESAASACGNSSA) show a composition bias toward polar residues. Over residues 715 to 726 (KPDKDSKKEKKG) the composition is skewed to basic and acidic residues. Residue S743 is modified to Phosphoserine. The SH3 4 domain occupies 835–894 (VVCERHRVVVSYPPQSEAELELKEGDIVFVHKKREDGWFKGTLQRNGKTGLFPGSFVENI).

This sequence belongs to the SH3RF family. Interacts with HERP1. Interacts with RAC1; in a GTP-dependent manner. Interacts with MAP3K10/MLK2 and MAP3K11/MLK3. Interacts with MAPK8IP; this interaction leads to the PJAC complex (POSH-JIP or SH3RF1/MAPK8IP apoptotic complex) with a 1:1 ratio. Interacts with SIAH1. Probably part of a signaling complex that may contain SH3RF1, MAPK8IP, DLK1, MAP2K4/MKK4, MAP2K7/MKK7, MAPK8/JNK1, MAPK9/JNK2, AKT1 and AKT2. Found in a complex with RAC2, MAP3K7/TAK1, MAP2K7/MKK7, MAPK8IP1/JIP1, MAPK8/JNK1 and MAPK9/JNK2. Found in a complex with RAC1, MAP3K11/MLK3, MAP2K7/MKK7, MAPK8IP1/JIP1 and MAPK8/JNK1. Interacts with SH3RF2. In terms of processing, phosphorylated at Ser-305 by AKT1 and AKT2. When phosphorylated, it has reduced ability to bind Rac. Post-translationally, autoubiquitinated. Ubiquitinated by SH3RF2, leading to proteasome-mediated degradation.

It localises to the cytoplasm. It is found in the perinuclear region. The protein resides in the cell projection. Its subcellular location is the lamellipodium. The protein localises to the golgi apparatus. It localises to the trans-Golgi network. It catalyses the reaction S-ubiquitinyl-[E2 ubiquitin-conjugating enzyme]-L-cysteine + [acceptor protein]-L-lysine = [E2 ubiquitin-conjugating enzyme]-L-cysteine + N(6)-ubiquitinyl-[acceptor protein]-L-lysine.. It participates in protein modification; protein ubiquitination. Its function is as follows. Has E3 ubiquitin-protein ligase activity. In the absence of an external substrate, it can catalyze self-ubiquitination. Stimulates ubiquitination of potassium channel KCNJ1, enhancing it's dynamin-dependent and clathrin-independent endocytosis. Acts as a scaffold protein that coordinates with MAPK8IP1/JIP1 in organizing different components of the JNK pathway, including RAC1 or RAC2, MAP3K11/MLK3 or MAP3K7/TAK1, MAP2K7/MKK7, MAPK8/JNK1 and/or MAPK9/JNK2 into a functional multiprotein complex to ensure the effective activation of the JNK signaling pathway. Regulates the differentiation of CD4(+) and CD8(+) T-cells and promotes T-helper 1 (Th1) cell differentiation. Regulates the activation of MAPK8/JNK1 and MAPK9/JNK2 in CD4(+) T-cells and the activation of MAPK8/JNK1 in CD8(+) T-cells. Plays a crucial role in the migration of neocortical neurons in the developing brain. Controls proper cortical neuronal migration and the formation of proximal cytoplasmic dilation in the leading process (PCDLP) in migratory neocortical neurons by regulating the proper localization of activated RAC1 and F-actin assembly. This chain is E3 ubiquitin-protein ligase SH3RF1 (Sh3rf1), found in Rattus norvegicus (Rat).